We begin with the raw amino-acid sequence, 243 residues long: Cell surface glycoprotein CD200 receptor 1-B (243 aa).

Residues 1-29 (MEISQQAGWCKKPASPMNTRAALEAVRNT) lie on the Cytoplasmic side of the membrane. A helical; Signal-anchor for type II membrane protein transmembrane segment spans residues 30-47 (AWTIVLLTSAAVMGASGI). The region spanning 47-146 (ISRVSANLGH…GNFHYLYHLT (100 aa)) is the Ig-like V-type domain. Over 48 to 243 (SRVSANLGHS…LAQLPGGSAP (196 aa)) the chain is Lumenal. Cystine bridges form between C62–C130 and C165–C214. N64, N67, N127, N193, N222, and N228 each carry an N-linked (GlcNAc...) asparagine glycan. Positions 144 to 228 (HLTVLVAPRM…ATLNETRSIN (85 aa)) constitute an Ig-like C2-type domain.

Belongs to the CD200R family. Expressed in peripheral blood lymphocytes (PBL) and peripheral blood mononuclear cells (PBMC).

It localises to the membrane. The chain is Cell surface glycoprotein CD200 receptor 1-B (CD200R1B) from Gallus gallus (Chicken).